The chain runs to 309 residues: DDRGK domain-containing protein 1 (309 aa).

Residues 1 to 2 (MD) lie on the Lumenal side of the membrane. A helical membrane pass occupies residues 3 to 23 (LIILVGIAVALLVVIVTLYLL). Over 24-309 (QKKNAAPETK…ISAGGGEASS (286 aa)) the chain is Cytoplasmic. 2 disordered regions span residues 32-53 (TKVA…VPRR) and 79-175 (ALPA…KEER). Positions 87–96 (DHEDEGQVDG) are enriched in acidic residues. The segment covering 107–175 (LDEKMGAKKR…DAERLAKEER (69 aa)) has biased composition (basic and acidic residues). Residues 120–177 (EAKEQKRLQREQELHDREQRKVKEAKEEAERKQQEDLEAEAERKRVDAERLAKEERER) are a coiled coil.

It belongs to the DDRGK1 family. As to quaternary structure, interacts with Atg9; the interaction is transient.

Its subcellular location is the endoplasmic reticulum membrane. In terms of biological role, substrate adapter for ufmylation, the covalent attachment of the ubiquitin-like modifier UFM1 to substrate proteins. Required for ufmylation of Atg9; protects the nervous system during aging, possibly by stabilizing Atg9 and supporting its function. This chain is DDRGK domain-containing protein 1, found in Drosophila melanogaster (Fruit fly).